The following is an 89-amino-acid chain: Small ribosomal subunit protein uS15 (89 aa).

Belongs to the universal ribosomal protein uS15 family. Part of the 30S ribosomal subunit. Forms a bridge to the 50S subunit in the 70S ribosome, contacting the 23S rRNA.

One of the primary rRNA binding proteins, it binds directly to 16S rRNA where it helps nucleate assembly of the platform of the 30S subunit by binding and bridging several RNA helices of the 16S rRNA. Its function is as follows. Forms an intersubunit bridge (bridge B4) with the 23S rRNA of the 50S subunit in the ribosome. The polypeptide is Small ribosomal subunit protein uS15 (Chlorobaculum tepidum (strain ATCC 49652 / DSM 12025 / NBRC 103806 / TLS) (Chlorobium tepidum)).